The chain runs to 684 residues: RNA helicase NPH-II (684 aa).

The 176-residue stretch at 184-359 folds into the Helicase ATP-binding domain; the sequence is FRAWAARRPT…EFFPDAEFVH (176 aa). Position 197–204 (197–204) interacts with ATP; sequence GGTGVGKT. Positions 308 to 311 match the DEXH box motif; the sequence is DEVH. Positions 392–563 constitute a Helicase C-terminal domain; sequence NVSAALSAHR…DLYVQPSDLE (172 aa).

This sequence belongs to the DEAD box helicase family. DEAH subfamily. Monomer.

The protein localises to the virion. The catalysed reaction is ATP + H2O = ADP + phosphate + H(+). NTP-dependent helicase that catalyzes unidirectional unwinding of 3'tailed duplex RNAs and plays an important role during transcription of early mRNAs, presumably by preventing R-loop formation behind the elongating RNA polymerase. Might also play a role in the export of newly synthesized mRNA chains out of the core into the cytoplasm. Required for replication and propagation of viral particles. This Homo sapiens (Human) protein is RNA helicase NPH-II (NPH2).